We begin with the raw amino-acid sequence, 443 residues long: Arginine biosynthesis bifunctional protein ArgJ, mitochondrial (443 aa).

Substrate contacts are provided by Thr-179, Lys-206, Thr-217, Glu-303, Asn-438, and Ser-443. Thr-217 acts as the Nucleophile in catalysis.

Belongs to the ArgJ family. In terms of assembly, heterodimer of an alpha and a beta chain. Post-translationally, the alpha and beta chains are autoproteolytically processed from a single precursor protein within the mitochondrion.

It is found in the mitochondrion matrix. The catalysed reaction is N(2)-acetyl-L-ornithine + L-glutamate = N-acetyl-L-glutamate + L-ornithine. It catalyses the reaction L-glutamate + acetyl-CoA = N-acetyl-L-glutamate + CoA + H(+). It participates in amino-acid biosynthesis; L-arginine biosynthesis; L-ornithine and N-acetyl-L-glutamate from L-glutamate and N(2)-acetyl-L-ornithine (cyclic): step 1/1. Its pathway is amino-acid biosynthesis; L-arginine biosynthesis; N(2)-acetyl-L-ornithine from L-glutamate: step 1/4. Functionally, catalyzes two activities which are involved in the cyclic version of arginine biosynthesis: the synthesis of acetylglutamate from glutamate and acetyl-CoA, and of ornithine by transacetylation between acetylornithine and glutamate. The sequence is that of Arginine biosynthesis bifunctional protein ArgJ, mitochondrial from Eremothecium gossypii (strain ATCC 10895 / CBS 109.51 / FGSC 9923 / NRRL Y-1056) (Yeast).